Reading from the N-terminus, the 210-residue chain is Probable GTP-binding protein EngB (210 aa).

The EngB-type G domain maps to 30 to 204; the sequence is QGYEVAFAGR…YRVLADWMEL (175 aa). Residues 38–45, 64–68, 82–85, 149–152, and 182–185 contribute to the GTP site; these read GRSNAGKS, GRTQL, DLPG, TKAD, and LFSA. The Mg(2+) site is built by S45 and T66.

The protein belongs to the TRAFAC class TrmE-Era-EngA-EngB-Septin-like GTPase superfamily. EngB GTPase family. The cofactor is Mg(2+).

In terms of biological role, necessary for normal cell division and for the maintenance of normal septation. The sequence is that of Probable GTP-binding protein EngB from Pseudomonas entomophila (strain L48).